The chain runs to 149 residues: Large ribosomal subunit protein uL15 (149 aa).

The span at 1 to 11 shows a compositional bias: basic and acidic residues; that stretch reads MSDPIKLHDLR. Residues 1–44 form a disordered region; sequence MSDPIKLHDLRPAPGAKKAKTRVGRGEASKGKTAGRGTKGTKAR.

It belongs to the universal ribosomal protein uL15 family. As to quaternary structure, part of the 50S ribosomal subunit.

Functionally, binds to the 23S rRNA. This Corynebacterium jeikeium (strain K411) protein is Large ribosomal subunit protein uL15.